A 354-amino-acid polypeptide reads, in one-letter code: B-cell differentiation antigen CD72 (354 aa).

Topologically, residues 1-95 (MADAITYADL…PRCPTVCLQY (95 aa)) are cytoplasmic. Phosphotyrosine; by LYN is present on residues Tyr-7 and Tyr-39. The chain crosses the membrane as a helical; Signal-anchor for type II membrane protein span at residues 96–116 (FLLGLLVSCLMLGVAVICLGV). The Extracellular portion of the chain corresponds to 117-354 (RYLQVSRQFQ…FRFPDGINLN (238 aa)). N-linked (GlcNAc...) asparagine glycosylation occurs at Asn-136. In terms of domain architecture, C-type lectin spans 231-342 (CCPCGWIPYQ…AELHPCICES (112 aa)). Cystine bridges form between Cys-232/Cys-243, Cys-260/Cys-340, and Cys-315/Cys-332.

In terms of assembly, homodimer; disulfide-linked. Associates with CD5. Interacts (tyrosine phosphorylated) with PTPN6/SHP-1. Post-translationally, phosphorylated upon engagement of the B-cell receptor, probably by LYN or SYK. Phosphorylation at Tyr-7 is important for interaction with PTPN6/SHP-1. In terms of tissue distribution, pre-B-cells and B-cells but not terminally differentiated plasma cells.

The protein localises to the membrane. Co-receptor of B cell receptor (BCR) that plays both positive and negative roles on B-cell functions. Recognizes the Sm/ribonucleoprotein (RNP) self-antigen ligand, and coligation of CD72 and BCR inhibits BCR signaling. Mechanistically, ligand binding leads to the recruitment of PTPN6/SHP-1 to the BCR complex which is inhibitory to BCR signaling. Acts also as a ligand for CD5 and thereby plays a critical role in maintaining regulatory T and B-cell homeostasis. In Mus musculus (Mouse), this protein is B-cell differentiation antigen CD72 (Cd72).